The following is a 330-amino-acid chain: Beta-ketoacyl-[acyl-carrier-protein] synthase III (330 aa).

Active-site residues include Cys114 and His257. The ACP-binding stretch occupies residues 258–262; it reads QANLR. Residue Asn287 is part of the active site.

Belongs to the thiolase-like superfamily. FabH family. As to quaternary structure, homodimer.

Its subcellular location is the cytoplasm. It catalyses the reaction malonyl-[ACP] + acetyl-CoA + H(+) = 3-oxobutanoyl-[ACP] + CO2 + CoA. The protein operates within lipid metabolism; fatty acid biosynthesis. Catalyzes the condensation reaction of fatty acid synthesis by the addition to an acyl acceptor of two carbons from malonyl-ACP. Catalyzes the first condensation reaction which initiates fatty acid synthesis and may therefore play a role in governing the total rate of fatty acid production. Possesses both acetoacetyl-ACP synthase and acetyl transacylase activities. Its substrate specificity determines the biosynthesis of branched-chain and/or straight-chain of fatty acids. This is Beta-ketoacyl-[acyl-carrier-protein] synthase III from Nitratidesulfovibrio vulgaris (strain ATCC 29579 / DSM 644 / CCUG 34227 / NCIMB 8303 / VKM B-1760 / Hildenborough) (Desulfovibrio vulgaris).